Here is a 327-residue protein sequence, read N- to C-terminus: Putative HTH-type transcriptional regulatory protein MmarC6_0210 (327 aa).

In terms of domain architecture, HTH cro/C1-type spans 128–183 (LRETREKLKISVGELAEISRVSRKTIYKYEQNEANPSAEVAIKIEEYLDVPLIKGI). Residues 139–158 (VGELAEISRVSRKTIYKYEQ) constitute a DNA-binding region (H-T-H motif).

The polypeptide is Putative HTH-type transcriptional regulatory protein MmarC6_0210 (Methanococcus maripaludis (strain C6 / ATCC BAA-1332)).